The following is a 200-amino-acid chain: Holliday junction branch migration complex subunit RuvA (200 aa).

The tract at residues 1 to 64 is domain I; sequence MIAHLTGLVG…EDAFLLYGFA (64 aa). The segment at 65-143 is domain II; the sequence is EAAERDWFRL…RMPAGPGVTI (79 aa). A flexible linker region spans residues 144–147; it reads AAPP. A domain III region spans residues 148–200; sequence ASGGVEADALLALAGLGFRRAEAQPVVGRILARLDGKADLDVVIRESLRELAR.

This sequence belongs to the RuvA family. In terms of assembly, homotetramer. Forms an RuvA(8)-RuvB(12)-Holliday junction (HJ) complex. HJ DNA is sandwiched between 2 RuvA tetramers; dsDNA enters through RuvA and exits via RuvB. An RuvB hexamer assembles on each DNA strand where it exits the tetramer. Each RuvB hexamer is contacted by two RuvA subunits (via domain III) on 2 adjacent RuvB subunits; this complex drives branch migration. In the full resolvosome a probable DNA-RuvA(4)-RuvB(12)-RuvC(2) complex forms which resolves the HJ.

The protein resides in the cytoplasm. The RuvA-RuvB-RuvC complex processes Holliday junction (HJ) DNA during genetic recombination and DNA repair, while the RuvA-RuvB complex plays an important role in the rescue of blocked DNA replication forks via replication fork reversal (RFR). RuvA specifically binds to HJ cruciform DNA, conferring on it an open structure. The RuvB hexamer acts as an ATP-dependent pump, pulling dsDNA into and through the RuvAB complex. HJ branch migration allows RuvC to scan DNA until it finds its consensus sequence, where it cleaves and resolves the cruciform DNA. In Gluconacetobacter diazotrophicus (strain ATCC 49037 / DSM 5601 / CCUG 37298 / CIP 103539 / LMG 7603 / PAl5), this protein is Holliday junction branch migration complex subunit RuvA.